The sequence spans 643 residues: 1-deoxy-D-xylulose-5-phosphate synthase (643 aa).

Residues H89 and 130–132 each bind thiamine diphosphate; that span reads GHS. D161 contacts Mg(2+). Residues 162-163, N190, F297, and E380 contribute to the thiamine diphosphate site; that span reads GA. N190 contributes to the Mg(2+) binding site.

The protein belongs to the transketolase family. DXPS subfamily. As to quaternary structure, homodimer. Mg(2+) is required as a cofactor. The cofactor is thiamine diphosphate.

The enzyme catalyses D-glyceraldehyde 3-phosphate + pyruvate + H(+) = 1-deoxy-D-xylulose 5-phosphate + CO2. The protein operates within metabolic intermediate biosynthesis; 1-deoxy-D-xylulose 5-phosphate biosynthesis; 1-deoxy-D-xylulose 5-phosphate from D-glyceraldehyde 3-phosphate and pyruvate: step 1/1. Functionally, catalyzes the acyloin condensation reaction between C atoms 2 and 3 of pyruvate and glyceraldehyde 3-phosphate to yield 1-deoxy-D-xylulose-5-phosphate (DXP). This is 1-deoxy-D-xylulose-5-phosphate synthase from Hahella chejuensis (strain KCTC 2396).